The following is a 359-amino-acid chain: MEHDGTAALGWAARDASGHLSPFSFTRRVQEEDDVTIKVLYCGICHTDLHTIKNEWGNAMYPVVPGHEIVGVVAGVGAGVTRFKAGDTVGVGYFVDSCRACDSCGKGDENYCPTMVITSNGTDYGGATTQGGFSDVMVVRQDYVLRVPASLPPDGAAPLLCAGVTVYSPMVEYGLNAPGKHLGVVGLGGLGHLGVKFGKAFGMKVTVISSSPAKREEALERLGADAFLSSRDGEGMAAAAATMDGIIDTVSAGHPLVPLLSLLKPKGQMVVVGAPAAPLQLPAIAIIDGGKRVAGSGGGSVAECQAMLDFAGEHGIAADVEVVAMGDVNAALGRLERNDVRYRFVIDVAGTLHAAAAPS.

Cys45 lines the Zn(2+) pocket. Thr47 lines the NADP(+) pocket. The Zn(2+) site is built by His67, Glu68, Cys98, Cys101, Cys104, Cys112, and Cys161. Residues Thr165, 186–191 (GLGGLG), 209–214 (SSSPAK), Thr249, Gly273, and 296–298 (SGG) each bind NADP(+).

It belongs to the zinc-containing alcohol dehydrogenase family. As to quaternary structure, homodimer. Zn(2+) is required as a cofactor.

The catalysed reaction is (E)-cinnamyl alcohol + NADP(+) = (E)-cinnamaldehyde + NADPH + H(+). It catalyses the reaction (E)-coniferol + NADP(+) = (E)-coniferaldehyde + NADPH + H(+). The enzyme catalyses (E)-sinapyl alcohol + NADP(+) = (E)-sinapaldehyde + NADPH + H(+). It carries out the reaction (E)-4-coumaroyl alcohol + NADP(+) = (E)-4-coumaraldehyde + NADPH + H(+). The catalysed reaction is (E)-caffeyl alcohol + NADP(+) = (E)-caffeyl aldehyde + NADPH + H(+). It participates in aromatic compound metabolism; phenylpropanoid biosynthesis. Functionally, involved in lignin biosynthesis. Catalyzes the final step specific for the production of lignin monomers. Catalyzes the NADPH-dependent reduction of coniferaldehyde, 5-hydroxyconiferaldehyde, sinapaldehyde, 4-coumaraldehyde and caffeyl aldehyde to their respective alcohols. This chain is Probable cinnamyl alcohol dehydrogenase 8A, found in Oryza sativa subsp. japonica (Rice).